Consider the following 740-residue polypeptide: Ion-translocating oxidoreductase complex subunit C (740 aa).

4Fe-4S ferredoxin-type domains are found at residues 369 to 397 (GEPQ…QQLY) and 407 to 436 (KATT…VQYF). Positions 377, 380, 383, 387, 416, 419, 422, and 426 each coordinate [4Fe-4S] cluster. Disordered regions lie at residues 602 to 621 (KLEQ…PRKA) and 660 to 718 (ARAK…RKAA). The span at 611–621 (KPEEQVDPRKA) shows a compositional bias: basic and acidic residues.

This sequence belongs to the 4Fe4S bacterial-type ferredoxin family. RnfC subfamily. In terms of assembly, the complex is composed of six subunits: RsxA, RsxB, RsxC, RsxD, RsxE and RsxG. [4Fe-4S] cluster serves as cofactor.

It is found in the cell inner membrane. In terms of biological role, part of a membrane-bound complex that couples electron transfer with translocation of ions across the membrane. Required to maintain the reduced state of SoxR. This Escherichia coli O9:H4 (strain HS) protein is Ion-translocating oxidoreductase complex subunit C.